The following is a 68-amino-acid chain: MKTQFAIFLITLVLFQMFSQSDAIFKAIWSGIKSLFGKRGLSDLDDLDESFDGEVSQADIDFLKELMQ.

A signal peptide spans 1 to 23 (MKTQFAIFLITLVLFQMFSQSDA). Phenylalanine amide is present on Phe36. A propeptide spanning residues 40–68 (GLSDLDDLDESFDGEVSQADIDFLKELMQ) is cleaved from the precursor.

The protein belongs to the non-disulfide-bridged peptide (NDBP) superfamily. Short antimicrobial peptide (group 4) family. Expressed by the venom gland.

It localises to the secreted. The protein resides in the target cell membrane. Amphipathic peptide which inhibits the growth of Gram-positive bacteria. This is Peptide Hp1090 from Heterometrus petersii (Asian forest scorpion).